The following is a 540-amino-acid chain: Zinc finger protein 768 (540 aa).

Disordered stretches follow at residues 1–166 (MERE…FEAQ) and 239–258 (TGALRGPGRRGGRARGGQGP). Residues Ser-17, Ser-18, and Ser-23 each carry the phosphoserine modification. Tyr-27 is modified (phosphotyrosine). The residue at position 33 (Ser-33) is a Phosphoserine. The segment covering 34–53 (ENEEEEISQQEGSGDYEVEE) has biased composition (acidic residues). A phosphoserine mark is found at Ser-62, Ser-69, Ser-76, Ser-83, Ser-90, Ser-97, Ser-104, Ser-107, Ser-111, Ser-118, and Ser-125. Residues 62 to 77 (SPGFEPQSPEFEPQSP) show a composition bias toward low complexity. A compositionally biased stretch (polar residues) spans 107 to 119 (SDSQSPEFESQSP). Tyr-128 is modified (phosphotyrosine). Ser-132 is modified (phosphoserine). Tyr-135 bears the Phosphotyrosine mark. Ser-139 carries the post-translational modification Phosphoserine. Residue Tyr-142 is modified to Phosphotyrosine. A phosphoserine mark is found at Ser-144 and Ser-147. Polar residues predominate over residues 149–166 (YESQNTELKTQSPEFEAQ). Thr-158 bears the Phosphothreonine mark. Position 160 is a phosphoserine (Ser-160). The segment at 261–283 (NICGICGKSFGRGSTLIQHQRIH) adopts a C2H2-type 1 zinc-finger fold. A Phosphothreonine modification is found at Thr-284. Phosphotyrosine is present on Tyr-289. C2H2-type zinc fingers lie at residues 289–311 (YKCEVCSKAFSQSSDLIKHQRTH), 317–339 (YKCPRCGKAFADSSYLLRHQRTH), 345–367 (YKCPHCGKAFGDSSYLLRHQRTH), and 373–395 (YSCTECGKCYSQNSSLRSHQRVH). Phosphoserine occurs at positions 295 and 299. Residue Thr-396 is modified to Phosphothreonine. 5 consecutive C2H2-type zinc fingers follow at residues 401 to 423 (FSCGICGKSFSQRSALIPHARSH), 429 to 451 (FKCPECGKRFGQSSVLAIHARTH), 457 to 479 (YSCPDCGKTFNRSSTLIQHQRSH), 485 to 507 (YRCAVCGKGFCRSSTLLQHHRVH), and 513 to 535 (YKCDDCGKAFSQSSDLIRHQRTH). Ser-442 is subject to Phosphoserine.

This sequence belongs to the krueppel C2H2-type zinc-finger protein family. In terms of assembly, interacts (via zinc-finger domains) with TP53 (via N-terminus); interaction might be facilitated by TP53 oligomerization state. Interacts with ELP3. In terms of processing, may be phosphorylated at residue 'Ser-5' of the tandem heptapeptide repeats in the N-terminus. Phosphorylation might be increased upon RAS pathway activation and negatively regulate protein stability.

The protein resides in the nucleus. It localises to the chromosome. Functionally, binds to mammalian-wide interspersed repeat (MIRs) sequences in euchromatin and promoter regions of genes at the consensus sequence 5'-GCTGTGTG-[N20]-CCTCTCTG-3', consisting of two anchor regions connected by a linker region; the linker region probably does not contribute to the binding specificity. Required for cell homeostasis. May be involved in transcriptional regulation. The chain is Zinc finger protein 768 (ZNF768) from Homo sapiens (Human).